The chain runs to 298 residues: Putative cysteine protease YopT-like blr2058 (298 aa).

Basic and acidic residues predominate over residues 1-14 (MYNRVDGEYAHTEQ). Disordered stretches follow at residues 1–25 (MYNRVDGEYAHTEQAEESSWPADGS) and 59–80 (SDAIDDSSNTSGLSTSSLSSSS). The span at 65–80 (SSNTSGLSTSSLSSSS) shows a compositional bias: low complexity. Cys-109 is a catalytic residue. Residues 137–162 (NHRSAARRQEQSEKLKTQLKEDKAEG) show a composition bias toward basic and acidic residues. The interval 137–166 (NHRSAARRQEQSEKLKTQLKEDKAEGSHNF) is disordered. Residues His-223 and Asp-238 contribute to the active site.

The protein belongs to the peptidase C58 family.

Potential cysteine protease, which may play a central role after invasion of host cell. The protein is Putative cysteine protease YopT-like blr2058 of Bradyrhizobium diazoefficiens (strain JCM 10833 / BCRC 13528 / IAM 13628 / NBRC 14792 / USDA 110).